A 162-amino-acid chain; its full sequence is Transcription elongation factor GreA (162 aa).

A coiled-coil region spans residues 45–74 (ENAEYEAAREKQAFIEGRIKELEDMTARAE).

It belongs to the GreA/GreB family.

In terms of biological role, necessary for efficient RNA polymerase transcription elongation past template-encoded arresting sites. The arresting sites in DNA have the property of trapping a certain fraction of elongating RNA polymerases that pass through, resulting in locked ternary complexes. Cleavage of the nascent transcript by cleavage factors such as GreA or GreB allows the resumption of elongation from the new 3'terminus. GreA releases sequences of 2 to 3 nucleotides. The polypeptide is Transcription elongation factor GreA (Rickettsia felis (strain ATCC VR-1525 / URRWXCal2) (Rickettsia azadi)).